The primary structure comprises 398 residues: Apolipoprotein L1 (398 aa).

Positions 1–27 are cleaved as a signal peptide; the sequence is MEGAALLRVSVLCIWMSALFLGVGVRA. The span at 35-47 shows a compositional bias: polar residues; the sequence is QQNVPSGTDTGDP. Residues 35 to 55 form a disordered region; that stretch reads QQNVPSGTDTGDPQSKPLGDW. N-linked (GlcNAc...) asparagine glycosylation is present at Asn-261. Residues 297–317 are disordered; the sequence is PHASASRPRVTEPISAESGEQ. 2 positions are modified to phosphoserine; by FAM20C: Ser-311 and Ser-314.

It belongs to the apolipoprotein L family. In terms of assembly, in plasma, interacts with APOA1 and mainly associated with large high density lipoprotein particles. Post-translationally, phosphorylated by FAM20C in the extracellular medium. In terms of tissue distribution, plasma. Found on APOA-I-containing high density lipoprotein (HDL3). Expressed in pancreas, lung, prostate, liver, placenta and spleen.

The protein localises to the secreted. In terms of biological role, may play a role in lipid exchange and transport throughout the body. May participate in reverse cholesterol transport from peripheral cells to the liver. The chain is Apolipoprotein L1 (APOL1) from Homo sapiens (Human).